Reading from the N-terminus, the 285-residue chain is MTMSSFLINSNYIEPKFPPFEEFAPHGGPGGGDGAVGGGPGYPRPQSAPHLPAPNPHAARQPPAYYAPRAREPSYPGGLYPAPAAACPYACRGASPGRPEQSPAPGAHPSPAPQPPVPLGHCAPGPTTPAVATGGSAPACPLLLADQGPAGPKGKEPVVYPWMKKIHVSAVNSSYNGGEPKRSRTAYTRQQVLELEKEFHFNRYLTRRRRIEIAHTLCLSERQVKIWFQNRRMKWKKDHKLPNTKMRSSNTASAPAGPPGKAQTHSPHHHPHPLPGASTPIPSSI.

2 disordered regions span residues 19 to 70 (PFEE…APRA) and 94 to 130 (ASPG…TTPA). Positions 27-41 (GGPGGGDGAVGGGPG) are enriched in gly residues. The segment covering 44-70 (RPQSAPHLPAPNPHAARQPPAYYAPRA) has biased composition (low complexity). A compositionally biased stretch (pro residues) spans 106-118 (GAHPSPAPQPPVP). Positions 159 to 164 (VYPWMK) match the Antp-type hexapeptide motif. The homeobox DNA-binding region spans 180–239 (PKRSRTAYTRQQVLELEKEFHFNRYLTRRRRIEIAHTLCLSERQVKIWFQNRRMKWKKDH). The segment at 238–285 (DHKLPNTKMRSSNTASAPAGPPGKAQTHSPHHHPHPLPGASTPIPSSI) is disordered.

This sequence belongs to the Antp homeobox family. Deformed subfamily.

Its subcellular location is the nucleus. In terms of biological role, sequence-specific transcription factor which is part of a developmental regulatory system that provides cells with specific positional identities on the anterior-posterior axis. Binds to sites in the 5'-flanking sequence of its coding region with various affinities. The consensus sequences of the high and low affinity binding sites are 5'-TAATGA[CG]-3' and 5'-CTAATTTT-3'. This Mus musculus (Mouse) protein is Homeobox protein Hox-A4 (Hoxa4).